A 227-amino-acid chain; its full sequence is Tegument protein ORF55 (227 aa).

Cys-11 is lipidated: S-palmitoyl cysteine; by host. Residues 183–227 form a disordered region; the sequence is VTRQPEATLPKPPTEDPSVSAMHSSIPPRPSSTLEETTESAIGST. Residues 213–227 are compositionally biased toward polar residues; the sequence is SSTLEETTESAIGST.

The protein belongs to the herpesviridae UL51 family. As to quaternary structure, oligomerizes. Interacts with ORF42; this interaction mediates ORF42 incorporation to virions. Interacts with vBCL2. Phosphorylated. In terms of processing, palmitoylation is necessary for Golgi localization.

The protein localises to the virion tegument. Its subcellular location is the host cytoplasm. The protein resides in the host Golgi apparatus. Functionally, plays several roles during the time course of infection, including egress of virus particles from the perinuclear space and secondary envelopment of cytoplasmic capsids that bud into specific trans-Golgi network (TGN)-derived membranes. The polypeptide is Tegument protein ORF55 (ORF55) (Homo sapiens (Human)).